The sequence spans 216 residues: Probable GTP-binding protein EngB (216 aa).

The EngB-type G domain occupies 26–210 (PMATIIFAGR…KNRIFEVIRE (185 aa)). GTP contacts are provided by residues 34–41 (GRSNVGKS), 59–63 (GVTRK), 76–79 (DMPG), 156–159 (NKLD), and 189–191 (ISA). Mg(2+) contacts are provided by serine 41 and threonine 61.

The protein belongs to the TRAFAC class TrmE-Era-EngA-EngB-Septin-like GTPase superfamily. EngB GTPase family. Mg(2+) is required as a cofactor.

Necessary for normal cell division and for the maintenance of normal septation. The sequence is that of Probable GTP-binding protein EngB from Pyrococcus horikoshii (strain ATCC 700860 / DSM 12428 / JCM 9974 / NBRC 100139 / OT-3).